A 785-amino-acid polypeptide reads, in one-letter code: Endonuclease MutS2 (785 aa).

G332–T339 is an ATP binding site. A Smr domain is found at I710 to K785.

It belongs to the DNA mismatch repair MutS family. MutS2 subfamily. As to quaternary structure, homodimer. Binds to stalled ribosomes, contacting rRNA.

Its function is as follows. Endonuclease that is involved in the suppression of homologous recombination and thus may have a key role in the control of bacterial genetic diversity. In terms of biological role, acts as a ribosome collision sensor, splitting the ribosome into its 2 subunits. Detects stalled/collided 70S ribosomes which it binds and splits by an ATP-hydrolysis driven conformational change. Acts upstream of the ribosome quality control system (RQC), a ribosome-associated complex that mediates the extraction of incompletely synthesized nascent chains from stalled ribosomes and their subsequent degradation. Probably generates substrates for RQC. This chain is Endonuclease MutS2, found in Clostridium botulinum (strain Eklund 17B / Type B).